Here is a 397-residue protein sequence, read N- to C-terminus: Subtilisin-like protease 3 (397 aa).

The N-terminal stretch at 1–19 (MGCIKVISVFLAAIAAVDA) is a signal peptide. Positions 20-116 (RAFFHNRGGS…VEHDRVVKLA (97 aa)) are excised as a propeptide. An Inhibitor I9 domain is found at 35–116 (SYIVVMKDGV…VEHDRVVKLA (82 aa)). Residues 126 to 397 (TWGLGRVSHR…NRLLYNGSGQ (272 aa)) enclose the Peptidase S8 domain. Residues Asp-158 and His-189 each act as charge relay system in the active site. Residue Asn-250 is glycosylated (N-linked (GlcNAc...) asparagine). The active-site Charge relay system is Ser-344. Residue Asn-393 is glycosylated (N-linked (GlcNAc...) asparagine).

Belongs to the peptidase S8 family.

It is found in the secreted. Functionally, secreted subtilisin-like serine protease with keratinolytic activity that contributes to pathogenicity. The sequence is that of Subtilisin-like protease 3 (SUB3) from Trichophyton equinum (Horse ringworm fungus).